Reading from the N-terminus, the 382-residue chain is ATP phosphoribosyltransferase regulatory subunit (382 aa).

It belongs to the class-II aminoacyl-tRNA synthetase family. HisZ subfamily. As to quaternary structure, heteromultimer composed of HisG and HisZ subunits.

The protein localises to the cytoplasm. Its pathway is amino-acid biosynthesis; L-histidine biosynthesis; L-histidine from 5-phospho-alpha-D-ribose 1-diphosphate: step 1/9. Functionally, required for the first step of histidine biosynthesis. May allow the feedback regulation of ATP phosphoribosyltransferase activity by histidine. The protein is ATP phosphoribosyltransferase regulatory subunit of Burkholderia lata (strain ATCC 17760 / DSM 23089 / LMG 22485 / NCIMB 9086 / R18194 / 383).